Here is a 360-residue protein sequence, read N- to C-terminus: Peptide chain release factor 1 (360 aa).

Q235 is modified (N5-methylglutamine).

This sequence belongs to the prokaryotic/mitochondrial release factor family. Methylated by PrmC. Methylation increases the termination efficiency of RF1.

Its subcellular location is the cytoplasm. In terms of biological role, peptide chain release factor 1 directs the termination of translation in response to the peptide chain termination codons UAG and UAA. The chain is Peptide chain release factor 1 from Burkholderia cenocepacia (strain ATCC BAA-245 / DSM 16553 / LMG 16656 / NCTC 13227 / J2315 / CF5610) (Burkholderia cepacia (strain J2315)).